Here is a 362-residue protein sequence, read N- to C-terminus: Innexin-17 (362 aa).

A run of 4 helical transmembrane segments spans residues 27–47 (YFTV…QYVG), 101–121 (WVPF…VIWN), 189–209 (FLAT…MGLG), and 266–286 (LFIA…FDIF).

This sequence belongs to the pannexin family.

The protein localises to the cell membrane. It is found in the cell junction. The protein resides in the gap junction. Functionally, structural component of the gap junctions. The sequence is that of Innexin-17 from Caenorhabditis elegans.